A 709-amino-acid chain; its full sequence is Translation initiation factor IF-2 (709 aa).

Composition is skewed to basic and acidic residues over residues Asp47–Lys70 and Lys105–Leu121. Residues Asp47–Pro157 are disordered. A compositionally biased stretch (basic residues) spans Ala125 to Lys137. Residues Gln138–Pro149 are compositionally biased toward low complexity. One can recognise a tr-type G domain in the interval Glu240–Lys409. The interval Gly249–Thr256 is G1. Gly249 to Thr256 serves as a coordination point for GTP. The G2 stretch occupies residues Gly274 to His278. Positions Asp295–Gly298 are G3. Residues Asp295–His299 and Asn349–Asp352 contribute to the GTP site. The G4 stretch occupies residues Asn349–Asp352. Residues Ser385 to Lys387 form a G5 region.

The protein belongs to the TRAFAC class translation factor GTPase superfamily. Classic translation factor GTPase family. IF-2 subfamily.

The protein resides in the cytoplasm. One of the essential components for the initiation of protein synthesis. Protects formylmethionyl-tRNA from spontaneous hydrolysis and promotes its binding to the 30S ribosomal subunits. Also involved in the hydrolysis of GTP during the formation of the 70S ribosomal complex. This chain is Translation initiation factor IF-2, found in Geobacillus kaustophilus (strain HTA426).